The chain runs to 494 residues: Probable cobyric acid synthase (494 aa).

The region spanning 249–447 is the GATase cobBQ-type domain; sequence SVRIAVIRLP…LHGIFFNRRF (199 aa). Cysteine 331 acts as the Nucleophile in catalysis. Residue histidine 439 is part of the active site.

It belongs to the CobB/CobQ family. CobQ subfamily.

Its pathway is cofactor biosynthesis; adenosylcobalamin biosynthesis. In terms of biological role, catalyzes amidations at positions B, D, E, and G on adenosylcobyrinic A,C-diamide. NH(2) groups are provided by glutamine, and one molecule of ATP is hydrogenolyzed for each amidation. The protein is Probable cobyric acid synthase of Methanopyrus kandleri (strain AV19 / DSM 6324 / JCM 9639 / NBRC 100938).